We begin with the raw amino-acid sequence, 260 residues long: Flap endonuclease Xni (260 aa).

Mg(2+) is bound at residue Asp-104. The 5'-3' exonuclease domain occupies 160–249 (VSPQQLTDYW…LNGNLQQLRL (90 aa)). Residues Leu-171, Ala-172, Pro-180, Val-182, and Ile-185 each coordinate K(+). The tract at residues 184-189 (GIGPKS) is interaction with DNA.

It belongs to the Xni family. Requires Mg(2+) as cofactor. K(+) is required as a cofactor.

Functionally, has flap endonuclease activity. During DNA replication, flap endonucleases cleave the 5'-overhanging flap structure that is generated by displacement synthesis when DNA polymerase encounters the 5'-end of a downstream Okazaki fragment. This chain is Flap endonuclease Xni, found in Pectobacterium carotovorum subsp. carotovorum (strain PC1).